Here is a 237-residue protein sequence, read N- to C-terminus: Large ribosomal subunit protein uL1 (237 aa).

Belongs to the universal ribosomal protein uL1 family. Part of the 50S ribosomal subunit.

Binds directly to 23S rRNA. The L1 stalk is quite mobile in the ribosome, and is involved in E site tRNA release. In terms of biological role, protein L1 is also a translational repressor protein, it controls the translation of the L11 operon by binding to its mRNA. The chain is Large ribosomal subunit protein uL1 from Chloroflexus aggregans (strain MD-66 / DSM 9485).